The sequence spans 542 residues: Protein MGF 505-11L (542 aa).

The protein belongs to the asfivirus MGF 505 family.

Plays a role in virus cell tropism, and may be required for efficient virus replication in macrophages. The polypeptide is Protein MGF 505-11L (African swine fever virus (isolate Pig/Kenya/KEN-50/1950) (ASFV)).